Reading from the N-terminus, the 209-residue chain is Guanylate kinase (209 aa).

The Guanylate kinase-like domain maps to 5 to 182; sequence GLLIVISGPS…AVTKINSIIV (178 aa). ATP is bound at residue 12 to 19; that stretch reads GPSGAGKG.

Belongs to the guanylate kinase family.

Its subcellular location is the cytoplasm. It carries out the reaction GMP + ATP = GDP + ADP. In terms of biological role, essential for recycling GMP and indirectly, cGMP. This Clostridium acetobutylicum (strain ATCC 824 / DSM 792 / JCM 1419 / IAM 19013 / LMG 5710 / NBRC 13948 / NRRL B-527 / VKM B-1787 / 2291 / W) protein is Guanylate kinase.